Reading from the N-terminus, the 397-residue chain is Acetate kinase (397 aa).

N7 serves as a coordination point for Mg(2+). Position 14 (K14) interacts with ATP. Residue R90 coordinates substrate. The active-site Proton donor/acceptor is D147. Residues 207 to 211 (HLGNG), 282 to 284 (DFR), and 330 to 334 (GLGEN) contribute to the ATP site. E383 lines the Mg(2+) pocket.

Belongs to the acetokinase family. As to quaternary structure, homodimer. Mg(2+) serves as cofactor. Requires Mn(2+) as cofactor.

The protein resides in the cytoplasm. It carries out the reaction acetate + ATP = acetyl phosphate + ADP. The protein operates within metabolic intermediate biosynthesis; acetyl-CoA biosynthesis; acetyl-CoA from acetate: step 1/2. In terms of biological role, catalyzes the formation of acetyl phosphate from acetate and ATP. Can also catalyze the reverse reaction. This Clostridium botulinum (strain 657 / Type Ba4) protein is Acetate kinase.